A 358-amino-acid polypeptide reads, in one-letter code: tRNA N6-adenosine threonylcarbamoyltransferase (358 aa).

The Fe cation site is built by His-118 and His-122. Residues 143-147, Asp-176, Gly-189, and Asn-298 each bind substrate; that span reads IVSGG. Asp-326 contacts Fe cation.

Belongs to the KAE1 / TsaD family. Fe(2+) is required as a cofactor.

It localises to the cytoplasm. The enzyme catalyses L-threonylcarbamoyladenylate + adenosine(37) in tRNA = N(6)-L-threonylcarbamoyladenosine(37) in tRNA + AMP + H(+). Functionally, required for the formation of a threonylcarbamoyl group on adenosine at position 37 (t(6)A37) in tRNAs that read codons beginning with adenine. Is involved in the transfer of the threonylcarbamoyl moiety of threonylcarbamoyl-AMP (TC-AMP) to the N6 group of A37, together with TsaE and TsaB. TsaD likely plays a direct catalytic role in this reaction. The polypeptide is tRNA N6-adenosine threonylcarbamoyltransferase (Rhodopirellula baltica (strain DSM 10527 / NCIMB 13988 / SH1)).